Consider the following 371-residue polypeptide: Probable diguanylate cyclase DgcC (371 aa).

Transmembrane regions (helical) follow at residues 46 to 66 (AVGLAGMFLPIASTLVSHPPP), 68 to 88 (WWWLVLVGWAFVWPHLAWQIA), 112 to 132 (WVGVMGVNVLPSTAMLMIMCL), 143 to 163 (FVAGLVLMVVSCLVTLELTGI), and 171 to 191 (PLEWWLSLPIIVIYPLLFGWV). Positions 240 to 371 (RDATLLIIDI…AGRNRTEVAA (132 aa)) constitute a GGDEF domain. Asp-248 and Ile-249 together coordinate Mg(2+). Positions 256 and 265 each coordinate substrate. Position 291 (Asp-291) interacts with Mg(2+).

Requires Mg(2+) as cofactor.

It is found in the cell inner membrane. It carries out the reaction 2 GTP = 3',3'-c-di-GMP + 2 diphosphate. The protein operates within purine metabolism; 3',5'-cyclic di-GMP biosynthesis. Functionally, a probable diguanylate cyclase. The last member of a cascade of expressed proteins, its expression requires DgcM. DgcC production induces biosynthesis of cellulose in some E.coli isolates, but not in K12 strains. Cyclic-di-GMP is a second messenger which controls cell surface-associated traits in bacteria. This chain is Probable diguanylate cyclase DgcC, found in Escherichia coli (strain K12).